The following is a 548-amino-acid chain: MAAKDVKFGSDARVKMLRGVNILADAVKVTLGPKGRNVVLDKSFGAPAITKDGVSVAREIELEDKFENMGAQMVKEVASKANDAAGDGTTTATVLAQSIVTEGLKAVAAGMNPMDLKRGIDKAVVAAVAELKKLSVPCSDSISIAQVGTISANSDETVGKLIAEAMDKVGKEGVITVEEGTGLEDELDVVEGMQFDRGYLSPYFINKPENGSVELENPYILLVDKKISNIRELLPVLEGVAKASKPLLIVAEDVEGEALATLVVNTMRGIVKVAAVKAPGFGDRRKAMLHDIAVLTNGNVISEEIGLELEKATLEDLGQAKRIVINKDTTTIIDGVGEEDAIKGRVSQINQQIKESTSDYDREKLQERVAKLAGGVAVIKVGAATEVEMKEKRARVDDALHATRAAVEEGVVAGGGVALVRVAAAIVGLKGDNEDQNVGIRVAMRAMEAPLRQIVDNSGEEPSVIANSVKAGEGNYGYNATTEQYGDMIAMGILDPTKVTRSALQFAASIAGLMITTECMITDLPKDDKADLGAAGGMGGMGGMGGMM.

ATP contacts are provided by residues threonine 30–proline 33, lysine 51, aspartate 87–threonine 91, glycine 415, and aspartate 495.

The protein belongs to the chaperonin (HSP60) family. As to quaternary structure, forms a cylinder of 14 subunits composed of two heptameric rings stacked back-to-back. Interacts with the co-chaperonin GroES.

It localises to the cytoplasm. The enzyme catalyses ATP + H2O + a folded polypeptide = ADP + phosphate + an unfolded polypeptide.. In terms of biological role, together with its co-chaperonin GroES, plays an essential role in assisting protein folding. The GroEL-GroES system forms a nano-cage that allows encapsulation of the non-native substrate proteins and provides a physical environment optimized to promote and accelerate protein folding. The sequence is that of Chaperonin GroEL from Photorhabdus laumondii subsp. laumondii (strain DSM 15139 / CIP 105565 / TT01) (Photorhabdus luminescens subsp. laumondii).